The following is a 51-amino-acid chain: Large ribosomal subunit protein eL39 (51 aa).

It belongs to the eukaryotic ribosomal protein eL39 family.

In Pyrobaculum neutrophilum (strain DSM 2338 / JCM 9278 / NBRC 100436 / V24Sta) (Thermoproteus neutrophilus), this protein is Large ribosomal subunit protein eL39.